The primary structure comprises 183 residues: Ribosome maturation factor RimM (183 aa).

One can recognise a PRC barrel domain in the interval 104–183 (EGDYYWKDLM…TIEVDWDPGF (80 aa)).

It belongs to the RimM family. In terms of assembly, binds ribosomal protein uS19.

It is found in the cytoplasm. Its function is as follows. An accessory protein needed during the final step in the assembly of 30S ribosomal subunit, possibly for assembly of the head region. Essential for efficient processing of 16S rRNA. May be needed both before and after RbfA during the maturation of 16S rRNA. It has affinity for free ribosomal 30S subunits but not for 70S ribosomes. The chain is Ribosome maturation factor RimM from Salmonella choleraesuis (strain SC-B67).